The primary structure comprises 430 residues: Gamma-glutamyl phosphate reductase (430 aa).

The protein belongs to the gamma-glutamyl phosphate reductase family.

Its subcellular location is the cytoplasm. The enzyme catalyses L-glutamate 5-semialdehyde + phosphate + NADP(+) = L-glutamyl 5-phosphate + NADPH + H(+). It functions in the pathway amino-acid biosynthesis; L-proline biosynthesis; L-glutamate 5-semialdehyde from L-glutamate: step 2/2. Functionally, catalyzes the NADPH-dependent reduction of L-glutamate 5-phosphate into L-glutamate 5-semialdehyde and phosphate. The product spontaneously undergoes cyclization to form 1-pyrroline-5-carboxylate. The sequence is that of Gamma-glutamyl phosphate reductase from Rhodopseudomonas palustris (strain HaA2).